Reading from the N-terminus, the 219-residue chain is Type-5 uracil-DNA glycosylase (219 aa).

[4Fe-4S] cluster contacts are provided by Cys-13, Cys-16, Cys-115, and Cys-130.

It belongs to the uracil-DNA glycosylase (UDG) superfamily. Type 5 (UDGb) family.

DNA glycosylase with broad substrate specificity. Can remove uracil from double-stranded DNA containing either a U/G, U/A, U/C or U/T base pair. Can also excise hypoxanthine from double-stranded DNA containing G/I, T/I, and A/I base pairs, xanthine from both double-stranded and single stranded DNA, thymine from G/T mismatched DNA, 5'-hydroxymethyluracil and 5'-fluorouracil. The chain is Type-5 uracil-DNA glycosylase from Thermus thermophilus (strain ATCC 27634 / DSM 579 / HB8).